A 357-amino-acid chain; its full sequence is UDP-N-acetylglucosamine--N-acetylmuramyl-(pentapeptide) pyrophosphoryl-undecaprenol N-acetylglucosamine transferase (357 aa).

UDP-N-acetyl-alpha-D-glucosamine is bound by residues 12-14 (TAG), Arg-166, Ser-196, and Gln-291.

It belongs to the glycosyltransferase 28 family. MurG subfamily.

Its subcellular location is the cell membrane. The catalysed reaction is di-trans,octa-cis-undecaprenyl diphospho-N-acetyl-alpha-D-muramoyl-L-alanyl-D-glutamyl-meso-2,6-diaminopimeloyl-D-alanyl-D-alanine + UDP-N-acetyl-alpha-D-glucosamine = di-trans,octa-cis-undecaprenyl diphospho-[N-acetyl-alpha-D-glucosaminyl-(1-&gt;4)]-N-acetyl-alpha-D-muramoyl-L-alanyl-D-glutamyl-meso-2,6-diaminopimeloyl-D-alanyl-D-alanine + UDP + H(+). It participates in cell wall biogenesis; peptidoglycan biosynthesis. In terms of biological role, cell wall formation. Catalyzes the transfer of a GlcNAc subunit on undecaprenyl-pyrophosphoryl-MurNAc-pentapeptide (lipid intermediate I) to form undecaprenyl-pyrophosphoryl-MurNAc-(pentapeptide)GlcNAc (lipid intermediate II). This chain is UDP-N-acetylglucosamine--N-acetylmuramyl-(pentapeptide) pyrophosphoryl-undecaprenol N-acetylglucosamine transferase, found in Geobacillus kaustophilus (strain HTA426).